A 637-amino-acid chain; its full sequence is tRNA uridine 5-carboxymethylaminomethyl modification enzyme MnmG (637 aa).

Residue 14 to 19 coordinates FAD; sequence GAGHAG. 279–293 is an NAD(+) binding site; it reads GPRYCPSIEDKVVRF.

Belongs to the MnmG family. As to quaternary structure, homodimer. Heterotetramer of two MnmE and two MnmG subunits. FAD is required as a cofactor.

The protein resides in the cytoplasm. In terms of biological role, NAD-binding protein involved in the addition of a carboxymethylaminomethyl (cmnm) group at the wobble position (U34) of certain tRNAs, forming tRNA-cmnm(5)s(2)U34. This Desulfitobacterium hafniense (strain DSM 10664 / DCB-2) protein is tRNA uridine 5-carboxymethylaminomethyl modification enzyme MnmG.